The following is a 212-amino-acid chain: Large ribosomal subunit protein uL3 (212 aa).

The tract at residues 136–155 (THGNSVSHRVLGSTGQNQTP) is disordered. Gln-153 bears the N5-methylglutamine mark.

The protein belongs to the universal ribosomal protein uL3 family. As to quaternary structure, part of the 50S ribosomal subunit. Forms a cluster with proteins L14 and L19. Methylated by PrmB.

One of the primary rRNA binding proteins, it binds directly near the 3'-end of the 23S rRNA, where it nucleates assembly of the 50S subunit. The polypeptide is Large ribosomal subunit protein uL3 (Acinetobacter baumannii (strain AB307-0294)).